Consider the following 219-residue polypeptide: Probable nicotinate-nucleotide adenylyltransferase (219 aa).

This sequence belongs to the NadD family.

It carries out the reaction nicotinate beta-D-ribonucleotide + ATP + H(+) = deamido-NAD(+) + diphosphate. It functions in the pathway cofactor biosynthesis; NAD(+) biosynthesis; deamido-NAD(+) from nicotinate D-ribonucleotide: step 1/1. In terms of biological role, catalyzes the reversible adenylation of nicotinate mononucleotide (NaMN) to nicotinic acid adenine dinucleotide (NaAD). This chain is Probable nicotinate-nucleotide adenylyltransferase, found in Pseudoalteromonas atlantica (strain T6c / ATCC BAA-1087).